A 517-amino-acid polypeptide reads, in one-letter code: Ribonuclease Y (517 aa).

A helical transmembrane segment spans residues 1–21; it reads MIESLIALIAAIVGLGIGYLV. The KH domain maps to 207 to 273; it reads LINVINIKND…TKVIELLVED (67 aa). Positions 333–426 constitute an HD domain; the sequence is ALAHSLEVAH…VCAADTLSAA (94 aa).

It belongs to the RNase Y family.

The protein resides in the cell membrane. Its function is as follows. Endoribonuclease that initiates mRNA decay. This is Ribonuclease Y from Campylobacter jejuni subsp. jejuni serotype O:23/36 (strain 81-176).